A 1026-amino-acid polypeptide reads, in one-letter code: Tyrosine-protein phosphatase 1 (1026 aa).

Residues 29-315 (IRCTVTFLDS…EQHTFFRLKT (287 aa)) form the FERM domain. Disordered regions lie at residues 376–396 (SIDSSRYTNTTTTDSPELPSS), 430–456 (PLTTPLSPRRTRDYATDSESSAPSLRQ), 489–515 (GIHASTASVRPVSSGSTPNGASRKSAN), and 584–616 (SFASAGIGGSPPRSKRSPQSNKSSSPVGEDQVV). A compositionally biased stretch (polar residues) spans 446-456 (DSESSAPSLRQ). Over residues 600–609 (SPQSNKSSSP) the composition is skewed to low complexity. Positions 617-689 (TIKMRPDRHG…DHVVQFIRSA (73 aa)) constitute a PDZ domain. A Tyrosine-protein phosphatase domain is found at 753-1011 (VVDHFEMLYR…TFVCESILRA (259 aa)). Residues Asp920, 952–958 (CSAGIGR), and Gln996 each bind substrate. Cys952 functions as the Phosphocysteine intermediate in the catalytic mechanism.

It belongs to the protein-tyrosine phosphatase family. Non-receptor class subfamily.

It localises to the cytoplasm. It is found in the cytoskeleton. It catalyses the reaction O-phospho-L-tyrosyl-[protein] + H2O = L-tyrosyl-[protein] + phosphate. The protein is Tyrosine-protein phosphatase 1 (ptp-1) of Caenorhabditis elegans.